The sequence spans 197 residues: LexA repressor (197 aa).

The segment at residues 28-47 is a DNA-binding region (H-T-H motif); that stretch reads VREIARRFRITPRGALLHLI. Catalysis depends on for autocatalytic cleavage activity residues Ser119 and Lys156.

Belongs to the peptidase S24 family. As to quaternary structure, homodimer.

It carries out the reaction Hydrolysis of Ala-|-Gly bond in repressor LexA.. In terms of biological role, represses a number of genes involved in the response to DNA damage (SOS response), including recA and lexA. In the presence of single-stranded DNA, RecA interacts with LexA causing an autocatalytic cleavage which disrupts the DNA-binding part of LexA, leading to derepression of the SOS regulon and eventually DNA repair. The chain is LexA repressor from Thermotoga maritima (strain ATCC 43589 / DSM 3109 / JCM 10099 / NBRC 100826 / MSB8).